The following is a 557-amino-acid chain: CTP synthase (557 aa).

The amidoligase domain stretch occupies residues methionine 1–leucine 272. Residue serine 18 coordinates CTP. Serine 18 contributes to the UTP binding site. Residue serine 19–isoleucine 24 participates in ATP binding. Tyrosine 59 lines the L-glutamine pocket. Residue aspartate 76 coordinates ATP. Mg(2+)-binding residues include aspartate 76 and glutamate 146. CTP-binding positions include aspartate 153–glutamate 155, lysine 193–glutamine 198, and lysine 229. Residues lysine 193–glutamine 198 and lysine 229 contribute to the UTP site. In terms of domain architecture, Glutamine amidotransferase type-1 spans glutamate 299–glutamate 543. Residue glycine 363 coordinates L-glutamine. The active-site Nucleophile; for glutamine hydrolysis is the cysteine 390. L-glutamine-binding positions include leucine 391 to glutamine 394, glutamate 414, and arginine 471. Catalysis depends on residues histidine 516 and glutamate 518.

Belongs to the CTP synthase family. Homotetramer.

It catalyses the reaction UTP + L-glutamine + ATP + H2O = CTP + L-glutamate + ADP + phosphate + 2 H(+). The catalysed reaction is L-glutamine + H2O = L-glutamate + NH4(+). The enzyme catalyses UTP + NH4(+) + ATP = CTP + ADP + phosphate + 2 H(+). The protein operates within pyrimidine metabolism; CTP biosynthesis via de novo pathway; CTP from UDP: step 2/2. With respect to regulation, allosterically activated by GTP, when glutamine is the substrate; GTP has no effect on the reaction when ammonia is the substrate. The allosteric effector GTP functions by stabilizing the protein conformation that binds the tetrahedral intermediate(s) formed during glutamine hydrolysis. Inhibited by the product CTP, via allosteric rather than competitive inhibition. Its function is as follows. Catalyzes the ATP-dependent amination of UTP to CTP with either L-glutamine or ammonia as the source of nitrogen. Regulates intracellular CTP levels through interactions with the four ribonucleotide triphosphates. The polypeptide is CTP synthase (Chloroherpeton thalassium (strain ATCC 35110 / GB-78)).